The primary structure comprises 142 residues: Putative phosphatidylglycerol/phosphatidylinositol transfer protein 2 (142 aa).

The signal sequence occupies residues 1–20 (MKFYLYLSILLILLTSTSFG).

It belongs to the NPC2 family. Monomer.

Catalyzes the intermembrane transfer of phosphatidylglycerol and phosphatidylinositol. This is Putative phosphatidylglycerol/phosphatidylinositol transfer protein 2 from Dictyostelium discoideum (Social amoeba).